The chain runs to 205 residues: Probable inactive peroxygenase-like protein (205 aa).

A Proline-knot motif is present at residues 79–88 (PVQLFGYILP). Ser-183 is modified (phosphoserine).

Belongs to the caleosin family.

It is found in the lipid droplet. The sequence is that of Probable inactive peroxygenase-like protein from Arabidopsis thaliana (Mouse-ear cress).